The sequence spans 191 residues: Potassium-transporting ATPase KdpC subunit (191 aa).

Residues 6-26 traverse the membrane as a helical segment; sequence PALVLFILLTLLTGGVYPLLT.

It belongs to the KdpC family. As to quaternary structure, the system is composed of three essential subunits: KdpA, KdpB and KdpC.

It is found in the cell inner membrane. Its function is as follows. Part of the high-affinity ATP-driven potassium transport (or Kdp) system, which catalyzes the hydrolysis of ATP coupled with the electrogenic transport of potassium into the cytoplasm. This subunit acts as a catalytic chaperone that increases the ATP-binding affinity of the ATP-hydrolyzing subunit KdpB by the formation of a transient KdpB/KdpC/ATP ternary complex. The protein is Potassium-transporting ATPase KdpC subunit of Klebsiella pneumoniae subsp. pneumoniae (strain ATCC 700721 / MGH 78578).